Consider the following 313-residue polypeptide: Ribosomal protein uL3 glutamine methyltransferase (313 aa).

It belongs to the protein N5-glutamine methyltransferase family. PrmB subfamily.

The catalysed reaction is L-glutaminyl-[ribosomal protein uL3] + S-adenosyl-L-methionine = N(5)-methyl-L-glutaminyl-[ribosomal protein uL3] + S-adenosyl-L-homocysteine + H(+). Methylates large ribosomal subunit protein uL3 on a specific glutamine residue. The chain is Ribosomal protein uL3 glutamine methyltransferase from Pasteurella multocida (strain Pm70).